A 298-amino-acid chain; its full sequence is Protoheme IX farnesyltransferase (298 aa).

8 helical membrane passes run 24-44 (VVSL…PAWP), 46-66 (WTTI…AAAF), 97-117 (LVFA…VVNP), 118-138 (LTMW…TVLL), 146-166 (IVIG…AATG), 172-192 (ALLL…ALAL), 231-251 (LLPV…VLLG), and 278-298 (IWYL…PIPV).

This sequence belongs to the UbiA prenyltransferase family. Protoheme IX farnesyltransferase subfamily.

The protein resides in the cell inner membrane. It catalyses the reaction heme b + (2E,6E)-farnesyl diphosphate + H2O = Fe(II)-heme o + diphosphate. It participates in porphyrin-containing compound metabolism; heme O biosynthesis; heme O from protoheme: step 1/1. Its function is as follows. Converts heme B (protoheme IX) to heme O by substitution of the vinyl group on carbon 2 of heme B porphyrin ring with a hydroxyethyl farnesyl side group. This chain is Protoheme IX farnesyltransferase, found in Thiobacillus denitrificans (strain ATCC 25259 / T1).